A 475-amino-acid polypeptide reads, in one-letter code: Subtilisin-like protease PopC (475 aa).

2 disordered regions span residues 1-27 (MKSYLLVPKESIETQARVGPRGTEQGE) and 57-106 (TLPG…QTGA). The Peptidase S8 domain occupies 165–475 (NRGMSSLAER…KTGKGLAVFR (311 aa)). Active-site charge relay system residues include aspartate 201, histidine 243, and serine 423.

It belongs to the peptidase S8 family. In terms of assembly, interacts with PopD in non-starving cells.

It localises to the cytoplasm. It is found in the periplasm. The protein resides in the secreted. Its activity is regulated as follows. In non-starving cells, secretion and protease activity are inhibited by formation of a cytoplasmic complex with PopD. In response to starvation, PopD is degraded in a RelA- and FtsH(D)-dependent manner, thereby releasing pre-formed PopC for secretion. Secreted and active during starvation, and rapidly degraded upon secretion. Secretion is significantly and reversibly reduced by carbonyl cyanide m-chlorophenyl hydrazine (CCCP), which dissipates or reduces the proton motive force (PMF), and by nigericin, which affects the pH gradient. Required for fruiting body formation, a multicellular developmental program that is induced in response to starvation. Acts as a subtilisin-like protease that directly cleaves the CsgA precursor protein (p25) on the cell surface to generate the intercellular C-signal protein (p17) in starving cells. Preferentially acts in cis, i.e. PopC secreted by a cell only cleaves p25 on that cell. May also be important for processing of other protein(s) that are important for development. The polypeptide is Subtilisin-like protease PopC (Myxococcus xanthus (strain DK1622)).